A 161-amino-acid polypeptide reads, in one-letter code: Putative 4-hydroxy-4-methyl-2-oxoglutarate aldolase (161 aa).

Residues 77–80 and Arg99 each bind substrate; that span reads GGNL. A divalent metal cation is bound at residue Asp100.

Belongs to the class II aldolase/RraA-like family. In terms of assembly, homotrimer. Requires a divalent metal cation as cofactor.

The enzyme catalyses 4-hydroxy-4-methyl-2-oxoglutarate = 2 pyruvate. The catalysed reaction is oxaloacetate + H(+) = pyruvate + CO2. Functionally, catalyzes the aldol cleavage of 4-hydroxy-4-methyl-2-oxoglutarate (HMG) into 2 molecules of pyruvate. Also contains a secondary oxaloacetate (OAA) decarboxylase activity due to the common pyruvate enolate transition state formed following C-C bond cleavage in the retro-aldol and decarboxylation reactions. The protein is Putative 4-hydroxy-4-methyl-2-oxoglutarate aldolase of Methylococcus capsulatus (strain ATCC 33009 / NCIMB 11132 / Bath).